Here is a 354-residue protein sequence, read N- to C-terminus: Ferrochelatase (354 aa).

Residues His214 and Glu295 each coordinate Fe cation.

It belongs to the ferrochelatase family.

Its subcellular location is the cytoplasm. It catalyses the reaction heme b + 2 H(+) = protoporphyrin IX + Fe(2+). The protein operates within porphyrin-containing compound metabolism; protoheme biosynthesis; protoheme from protoporphyrin-IX: step 1/1. Functionally, catalyzes the ferrous insertion into protoporphyrin IX. The polypeptide is Ferrochelatase (Burkholderia vietnamiensis (strain G4 / LMG 22486) (Burkholderia cepacia (strain R1808))).